A 1189-amino-acid chain; its full sequence is Phosphinothricin tripeptide synthetase PhsB (1189 aa).

Positions 5–80 (QTDDVVTGRI…ALAKRIRASR (76 aa)) constitute a Carrier 1 domain. Ser-40 bears the O-(pantetheine 4'-phosphoryl)serine mark. 2 disordered regions span residues 75–97 (RIRA…PVDS) and 454–476 (TPDR…GGDT). The condensation stretch occupies residues 100-541 (TAPLTFQQEP…VALLPLQEPA (442 aa)). The span at 455-472 (PDRDGREPGEGPFAREES) shows a compositional bias: basic and acidic residues. The interval 572-969 (AQAHRTPDAV…GREDGQVKLR (398 aa)) is adenylation. Positions 1045–1081 (DRVPLTPSGKTDRKALPDPAAGEQPRSGRGAAPGTPA) are disordered. In terms of domain architecture, Carrier 2 spans 1076 to 1151 (APGTPAEREL…DFALAVVTAQ (76 aa)). At Ser-1111 the chain carries O-(pantetheine 4'-phosphoryl)serine.

Belongs to the NRP synthetase family. It depends on pantetheine 4'-phosphate as a cofactor.

It carries out the reaction holo-[peptidyl-carrier protein] + L-alanine + ATP = L-alanyl-[peptidyl-carrier protein] + AMP + diphosphate. It functions in the pathway secondary metabolite biosynthesis; bialaphos biosynthesis. Involved in the biosynthesis of phosphinothricin tripeptide (PTT), also known as bialaphos (BA), a natural-product antibiotic and potent herbicide. Adenylates L-alanine and loads it onto a peptidyl carrier domain via a thioester linkage to the phosphopanthetheine moiety. Shows weaker activity with aminobutyric acid and L-serine. This Streptomyces viridochromogenes (strain DSM 40736 / JCM 4977 / BCRC 1201 / Tue 494) protein is Phosphinothricin tripeptide synthetase PhsB.